We begin with the raw amino-acid sequence, 518 residues long: GMP synthase [glutamine-hydrolyzing] (518 aa).

The region spanning 11-203 (KIIVLDFGSQ…AFDVCQARSN (193 aa)) is the Glutamine amidotransferase type-1 domain. The active-site Nucleophile is cysteine 88. Catalysis depends on residues histidine 177 and glutamate 179. In terms of domain architecture, GMPS ATP-PPase spans 204–393 (WSMDDFIDMQ…LGMPHELVWR (190 aa)). 231 to 237 (SGGVDSS) contacts ATP.

In terms of assembly, homodimer.

The enzyme catalyses XMP + L-glutamine + ATP + H2O = GMP + L-glutamate + AMP + diphosphate + 2 H(+). Its pathway is purine metabolism; GMP biosynthesis; GMP from XMP (L-Gln route): step 1/1. Catalyzes the synthesis of GMP from XMP. The chain is GMP synthase [glutamine-hydrolyzing] from Ligilactobacillus salivarius (strain UCC118) (Lactobacillus salivarius).